The sequence spans 239 residues: ATP-dependent dethiobiotin synthetase BioD (239 aa).

Residue 15–20 coordinates ATP; the sequence is EIGKTF. A Mg(2+)-binding site is contributed by threonine 19. The active site involves lysine 40. Residues aspartate 57, 118–121, and 178–179 contribute to the ATP site; these read EGVG and NH. Mg(2+) is bound by residues aspartate 57 and glutamate 118.

Belongs to the dethiobiotin synthetase family. Homodimer. The cofactor is Mg(2+).

Its subcellular location is the cytoplasm. The enzyme catalyses (7R,8S)-7,8-diammoniononanoate + CO2 + ATP = (4R,5S)-dethiobiotin + ADP + phosphate + 3 H(+). Its pathway is cofactor biosynthesis; biotin biosynthesis; biotin from 7,8-diaminononanoate: step 1/2. Functionally, catalyzes a mechanistically unusual reaction, the ATP-dependent insertion of CO2 between the N7 and N8 nitrogen atoms of 7,8-diaminopelargonic acid (DAPA, also called 7,8-diammoniononanoate) to form a ureido ring. The sequence is that of ATP-dependent dethiobiotin synthetase BioD from Burkholderia orbicola (strain MC0-3).